We begin with the raw amino-acid sequence, 460 residues long: Putative E3 ubiquitin-protein ligase RING1b (460 aa).

The interval 1-85 (MPSLKSFSAA…SQSSSAGELS (85 aa)) is disordered. Basic and acidic residues predominate over residues 21–31 (SEAERFNPEAV). Composition is skewed to acidic residues over residues 32–51 (EKEE…DEED) and 59–71 (EAED…EEED). Residues 103 to 143 (CSICLGIIRKTRTVMECLHRFCRECIDKSMRLGNNECPTCR) form an RING-type zinc finger. A disordered region spans residues 196–300 (QVSQRQSKAL…TEQTHQRDSR (105 aa)). Basic residues predominate over residues 220-234 (RSRRSGGGSRRRRNC). Residues 240-249 (DTSEANDDDD) show a composition bias toward acidic residues. Basic and acidic residues predominate over residues 250 to 265 (QNKRGKDSSSDEPCER). Low complexity predominate over residues 276-290 (SSSNANNNDNCAGNG).

In terms of assembly, heterodimer with RING1A. Interacts with CLF. Component of the PRC1-like complex, at least composed of RING1A, RING1B and LHP1.

It is found in the nucleus. The catalysed reaction is S-ubiquitinyl-[E2 ubiquitin-conjugating enzyme]-L-cysteine + [acceptor protein]-L-lysine = [E2 ubiquitin-conjugating enzyme]-L-cysteine + N(6)-ubiquitinyl-[acceptor protein]-L-lysine.. It participates in protein modification; protein ubiquitination. Its function is as follows. Putative E3 ubiquitin-protein ligase that mediates monoubiquitination of 'Lys-119' of histone H2A (H2AK119ub), thereby playing a central role in histone code and gene regulation. As part of the PRC1-like complex, repress class I KNOX gene expression. PcG PRC1 complex maintains the transcriptionally repressive state of many genes, including Hox genes, throughout development. PcG PRC1 complex acts via chromatin remodeling and modification of histones, rendering chromatin heritably changed in its expressibility. The chain is Putative E3 ubiquitin-protein ligase RING1b (RING1B) from Arabidopsis thaliana (Mouse-ear cress).